Consider the following 615-residue polypeptide: Sterol 3-beta-glucosyltransferase UGT80B1 (615 aa).

The interval 1-54 is disordered; it reads MASNVFDHPLQELEGEDNGVKSEKASLLETSGSVDTTPEDSGHRSSDGHRGLDH. Basic and acidic residues predominate over residues 40–54; sequence DSGHRSSDGHRGLDH.

This sequence belongs to the glycosyltransferase 28 family. In terms of tissue distribution, expressed in developing seeds, seedlings, leaves and around the apical tip of cotyledons. In embryo, expressed in the seed coat and cotyledons.

The enzyme catalyses a sterol + UDP-alpha-D-glucose = a sterol 3-beta-D-glucoside + UDP + H(+). Involved in the biosynthesis of sterol glucosides. Catalyzes the synthesis of steryl glycosides (SGs) and acyl steryl glycosides (ASGs) which are the most abundant sterol derivatives in higher plants. Can act on several sterols like sitosterol, campesterol and stigmasterol. Is required for embryonic development, seed suberin accumulation, cutin formation and flavanoid accumulation in the seed coat. Both UGT80A2 and UGT80B1 are required for the normal production of SGs and ASGs in seeds. The protein is Sterol 3-beta-glucosyltransferase UGT80B1 of Arabidopsis thaliana (Mouse-ear cress).